Reading from the N-terminus, the 301-residue chain is Mitochondrial carnitine/acylcarnitine carrier protein (301 aa).

Ala2 is modified (N-acetylalanine). The Cytoplasmic portion of the chain corresponds to 2–12 (AEEPKPISPLK). Solcar repeat units lie at residues 8–99 (ISPL…GKRL), 108–196 (LTYP…LKNL), and 207–293 (LSVP…PMKI). Residues 13–31 (NLLAGGFGGVCLVFVGHPL) traverse the membrane as a helical segment. Residues 32–73 (DTVKVRLQTQPPSLPGQPPMYSGTIDCFRKTLFREGITGLYR) are Mitochondrial matrix-facing. The helical transmembrane segment at 74-93 (GMAAPIIGVTPMFAVCFFGF) threads the bilayer. Residues 94–112 (GLGKRLQQKSPEDELTYPQ) are Cytoplasmic-facing. A helical membrane pass occupies residues 113–131 (LFTAGMLSGVFTTGIMTPG). At 132 to 170 (ERIKCLLQIQASSGKNKYSGTLDCAKKLYQEFGIRGFYK) the chain is on the mitochondrial matrix side. 2 positions are modified to N6-acetyllysine: Lys148 and Lys157. At Lys170 the chain carries N6-acetyllysine; alternate. Lys170 carries the post-translational modification N6-succinyllysine; alternate. A helical membrane pass occupies residues 171 to 190 (GTALTLMRDVPASGMYFMTY). Residues 191–211 (EWLKNLFTPQGKSVHDLSVPR) are Cytoplasmic-facing. The helical transmembrane segment at 212-230 (VLVAGGFRGIFNWVVAIPP) threads the bilayer. At 231–267 (DVLKSRFQTAPPGKYPNGFRDVLRELIREEGVTSLYK) the chain is on the mitochondrial matrix side. Residues 268–287 (GFNAVMIRAFPANAACFLGF) traverse the membrane as a helical segment. Residues 288–301 (EIPMKILNWIAPNL) are Cytoplasmic-facing.

It belongs to the mitochondrial carrier (TC 2.A.29) family. In terms of processing, the N-terminus is blocked.

The protein resides in the mitochondrion inner membrane. It catalyses the reaction O-acetyl-(R)-carnitine(in) + (R)-carnitine(out) = O-acetyl-(R)-carnitine(out) + (R)-carnitine(in). The enzyme catalyses an O-acyl-(R)-carnitine(in) + (R)-carnitine(out) = an O-acyl-(R)-carnitine(out) + (R)-carnitine(in). The catalysed reaction is O-propanoyl-(R)-carnitine(in) + (R)-carnitine(out) = O-propanoyl-(R)-carnitine(out) + (R)-carnitine(in). It carries out the reaction O-hexadecanoyl-(R)-carnitine(in) + (R)-carnitine(out) = O-hexadecanoyl-(R)-carnitine(out) + (R)-carnitine(in). It catalyses the reaction O-octanoyl-(R)-carnitine(in) + (R)-carnitine(out) = O-octanoyl-(R)-carnitine(out) + (R)-carnitine(in). The enzyme catalyses (R)-carnitine(in) = (R)-carnitine(out). Functionally, mediates the electroneutral exchange of acylcarnitines (O-acyl-(R)-carnitine or L-acylcarnitine) of different acyl chain lengths (ranging from O-acetyl-(R)-carnitine to long-chain O-acyl-(R)-carnitines) with free carnitine ((R)-carnitine or L-carnitine) across the mitochondrial inner membrane, via a ping-pong mechanism. Key player in the mitochondrial oxidation pathway, it translocates the fatty acids in the form of acylcarnitines into the mitochondrial matrix, where the carnitine palmitoyltransferase 2 (CPT-2) activates them to undergo fatty acid beta-oxidation. Catalyzes the unidirectional transport (uniport) of carnitine at lower rates than the antiport (exchange). The chain is Mitochondrial carnitine/acylcarnitine carrier protein from Rattus norvegicus (Rat).